Here is a 219-residue protein sequence, read N- to C-terminus: Occludin/ELL domain-containing protein 1 (219 aa).

The tract at residues Met1 to Thr110 is disordered. Residues Leu17–Arg43 show a composition bias toward low complexity. Residues Val72–Gly93 are compositionally biased toward basic and acidic residues. The region spanning Pro100–Asp210 is the OCEL domain.

The protein belongs to the ELL/occludin family.

This chain is Occludin/ELL domain-containing protein 1 (Ocel1), found in Mus musculus (Mouse).